Reading from the N-terminus, the 445-residue chain is Transmembrane protein 184C (445 aa).

The next 7 membrane-spanning stretches (helical) occupy residues 15–35, 46–66, 84–104, 177–197, 210–230, 252–272, and 285–305; these read LVVLLYIVGLLVVVPLCVWEL, AWFIAGIFLLMTIPISLWGIL, ILWMVPIYSLDSWIALKYPNI, YTVVRPFTTIIALICELVGVY, YLVILNNMSQLFAMYCLVLFY, VVFVSFWQAVLIALLVKVGVI, and AVATGLQDFIICVEMFLAAIA. Disordered stretches follow at residues 369 to 393 and 421 to 445; these read EHTSLLSSSTQDPISDASSMPSSPM and TSATRDTEESPELMHNSSEKALDRS. Residues 370 to 390 are compositionally biased toward polar residues; the sequence is HTSLLSSSTQDPISDASSMPS.

The protein belongs to the TMEM184 family.

It is found in the membrane. In terms of biological role, may play a role in cell growth. In Gallus gallus (Chicken), this protein is Transmembrane protein 184C (TMEM184C).